Reading from the N-terminus, the 51-residue chain is Light-harvesting protein B800/850/890 beta-2 chain (51 aa).

Residues 1 to 17 (ADEMRNVSDEEAKEFHA) lie on the Cytoplasmic side of the membrane. Positions 16 and 34 each coordinate a bacteriochlorophyll. Residues 18 to 40 (MFSQAFTVYVGVAVVAHILAWAW) form a helical membrane-spanning segment. Over 41 to 51 (RPWIPGDEGFG) the chain is Periplasmic.

The protein belongs to the antenna complex beta subunit family. The core complex is formed by different alpha and beta chains, binding bacteriochlorophyll molecules, and arranged most probably in tetrameric structures disposed around the reaction center. The non-pigmented gamma chains may constitute additional components.

It localises to the cell inner membrane. In terms of biological role, antenna complexes are light-harvesting systems, which transfer the excitation energy to the reaction centers. This is Light-harvesting protein B800/850/890 beta-2 chain from Halorhodospira halophila (strain DSM 244 / SL1) (Ectothiorhodospira halophila (strain DSM 244 / SL1)).